The following is a 315-amino-acid chain: Energy-coupling factor transporter ATP-binding protein EcfA2 (315 aa).

In terms of domain architecture, ABC transporter spans 31 to 275; that stretch reads IILDNVSYTY…QELLSKIQIE (245 aa). 68–75 is an ATP binding site; sequence GTTGSGKS.

Belongs to the ABC transporter superfamily. Energy-coupling factor EcfA family. In terms of assembly, forms a stable energy-coupling factor (ECF) transporter complex composed of 2 membrane-embedded substrate-binding proteins (S component), 2 ATP-binding proteins (A component) and 2 transmembrane proteins (T component).

The protein resides in the cell membrane. Its function is as follows. ATP-binding (A) component of a common energy-coupling factor (ECF) ABC-transporter complex. Unlike classic ABC transporters this ECF transporter provides the energy necessary to transport a number of different substrates. In Mesoplasma florum (strain ATCC 33453 / NBRC 100688 / NCTC 11704 / L1) (Acholeplasma florum), this protein is Energy-coupling factor transporter ATP-binding protein EcfA2.